The primary structure comprises 691 residues: Putative calcium up-regulated protein I (691 aa).

A Ricin B-type lectin domain is found at 47–174 (SNCYLKEKPQ…NYTSQIWTYN (128 aa)).

This sequence belongs to the cup family.

This is Putative calcium up-regulated protein I (cupI) from Dictyostelium discoideum (Social amoeba).